The primary structure comprises 308 residues: Small ribosomal subunit protein uS5c (308 aa).

A chloroplast-targeting transit peptide spans 1–55 (MATTATTTPSATSLTTLHRRIPLFPTTTTLLSLSSSSKPLFLSLSSTRSFPTHLY). Residues 152-215 (FEENVVQVRR…VDARRNIITV (64 aa)) enclose the S5 DRBM domain.

Component of the chloroplast small ribosomal subunit (SSU). Mature 70S chloroplast ribosomes of higher plants consist of a small (30S) and a large (50S) subunit. The 30S small subunit contains 1 molecule of ribosomal RNA (16S rRNA) and 24 different proteins. The 50S large subunit contains 3 rRNA molecules (23S, 5S and 4.5S rRNA) and 33 different proteins. uS5c binds directly to 16S ribosomal RNA.

Its subcellular location is the plastid. It localises to the chloroplast. Its function is as follows. Component of the chloroplast ribosome (chloro-ribosome), a dedicated translation machinery responsible for the synthesis of chloroplast genome-encoded proteins, including proteins of the transcription and translation machinery and components of the photosynthetic apparatus. The sequence is that of Small ribosomal subunit protein uS5c (rps5) from Spinacia oleracea (Spinach).